A 196-amino-acid chain; its full sequence is Holliday junction branch migration complex subunit RuvA (196 aa).

The segment at 1–63 (MYDYIKGKLS…DDAHLLFGFH (63 aa)) is domain I. The domain II stretch occupies residues 64–142 (TENEKEIFLN…EASGESATSR (79 aa)). Positions 143-148 (KVSSEQ) are flexible linker. Residues 148–196 (QNSNLEEAMEALLALGYKATELKKVKAFFEGTNETVEQYIKSSLKMLMK) form a domain III region.

This sequence belongs to the RuvA family. Homotetramer. Forms an RuvA(8)-RuvB(12)-Holliday junction (HJ) complex. HJ DNA is sandwiched between 2 RuvA tetramers; dsDNA enters through RuvA and exits via RuvB. An RuvB hexamer assembles on each DNA strand where it exits the tetramer. Each RuvB hexamer is contacted by two RuvA subunits (via domain III) on 2 adjacent RuvB subunits; this complex drives branch migration. In the full resolvosome a probable DNA-RuvA(4)-RuvB(12)-RuvC(2) complex forms which resolves the HJ.

Its subcellular location is the cytoplasm. Functionally, the RuvA-RuvB-RuvC complex processes Holliday junction (HJ) DNA during genetic recombination and DNA repair, while the RuvA-RuvB complex plays an important role in the rescue of blocked DNA replication forks via replication fork reversal (RFR). RuvA specifically binds to HJ cruciform DNA, conferring on it an open structure. The RuvB hexamer acts as an ATP-dependent pump, pulling dsDNA into and through the RuvAB complex. HJ branch migration allows RuvC to scan DNA until it finds its consensus sequence, where it cleaves and resolves the cruciform DNA. The sequence is that of Holliday junction branch migration complex subunit RuvA from Streptococcus agalactiae serotype III (strain NEM316).